The chain runs to 245 residues: Eukaryotic translation initiation factor 6 (245 aa).

This sequence belongs to the eIF-6 family. In terms of assembly, monomer. Associates with the 60S ribosomal subunit.

Its subcellular location is the cytoplasm. The protein localises to the nucleus. It is found in the nucleolus. Functionally, binds to the 60S ribosomal subunit and prevents its association with the 40S ribosomal subunit to form the 80S initiation complex in the cytoplasm. May also be involved in ribosome biogenesis. The polypeptide is Eukaryotic translation initiation factor 6 (Tetrahymena thermophila (strain SB210)).